We begin with the raw amino-acid sequence, 382 residues long: MAPRAGQPGLQGLLLVAAALSQPAAPCPFQCYCFGGPKLLLRCASGAELRQPPRDVPPDARNLTIVGANLTVLRAAAFAGGDGDGDQAAGVRLPLLSALRLTHNHIEVVEDGAFDGLPSLAALDLSHNPLRALGGGAFRGLPALRSLQLNHALVRGGPALLAALDAALAPLAELRLLGLAGNALSRLPPAALRLARLEQLDVRLNALAGLDPDELRALERDGGLPGPRLLLADNPLRCGCAARPLLAWLRNATERVPDSRRLRCAAPRALLDRPLLDLDGARLRCADSGADARGEEAEAAGPELEASYVFFGLVLALIGLIFLMVLYLNRRGIQRWMRNLREACRDQMEGYHYRYEQDADPRRAPAPAAPAGSRATSPGSGL.

The first 26 residues, 1–26 (MAPRAGQPGLQGLLLVAAALSQPAAP), serve as a signal peptide directing secretion. 2 disulfides stabilise this stretch: Cys27–Cys33 and Cys31–Cys43. At 27-307 (CPFQCYCFGG…EAAGPELEAS (281 aa)) the chain is on the extracellular side. LRR repeat units follow at residues 57-80 (PPDA…AFAG), 93-116 (LPLL…AFDG), 117-140 (LPSL…AFRG), 171-194 (LAEL…ALRL), and 196-217 (RLEQ…ELRA). A glycan (N-linked (GlcNAc...) asparagine) is linked at Asn62. 2 cysteine pairs are disulfide-bonded: Cys238–Cys264 and Cys240–Cys285. A helical transmembrane segment spans residues 308–328 (YVFFGLVLALIGLIFLMVLYL). The Cytoplasmic portion of the chain corresponds to 329-382 (NRRGIQRWMRNLREACRDQMEGYHYRYEQDADPRRAPAPAAPAGSRATSPGSGL). Residues 358–382 (DADPRRAPAPAAPAGSRATSPGSGL) are disordered. A compositionally biased stretch (low complexity) spans 365–382 (PAPAAPAGSRATSPGSGL).

The protein localises to the membrane. This Homo sapiens (Human) protein is Trophoblast glycoprotein-like (TPBGL).